A 156-amino-acid chain; its full sequence is Small ribosomal subunit protein uS7 (156 aa).

The protein belongs to the universal ribosomal protein uS7 family. In terms of assembly, part of the 30S ribosomal subunit. Contacts proteins S9 and S11.

Its function is as follows. One of the primary rRNA binding proteins, it binds directly to 16S rRNA where it nucleates assembly of the head domain of the 30S subunit. Is located at the subunit interface close to the decoding center, probably blocks exit of the E-site tRNA. The polypeptide is Small ribosomal subunit protein uS7 (Pseudomonas syringae pv. tomato (strain ATCC BAA-871 / DC3000)).